We begin with the raw amino-acid sequence, 464 residues long: Elongation factor 1-alpha (464 aa).

The tr-type G domain maps to 5 to 242 (KTHINIVVIG…DSVVPPQRPT (238 aa)). GTP contacts are provided by residues 14-21 (GHVDSGKS), 91-95 (DAPGH), and 153-156 (NKMD). 2 positions are modified to 5-glutamyl glycerylphosphorylethanolamine: Glu-301 and Glu-374.

It belongs to the TRAFAC class translation factor GTPase superfamily. Classic translation factor GTPase family. EF-Tu/EF-1A subfamily.

The protein localises to the cytoplasm. In terms of biological role, this protein promotes the GTP-dependent binding of aminoacyl-tRNA to the A-site of ribosomes during protein biosynthesis. The chain is Elongation factor 1-alpha from Onchocerca volvulus.